Reading from the N-terminus, the 507-residue chain is Secreted lipase ARB_01498 (507 aa).

Positions 1-21 are cleaved as a signal peptide; that stretch reads MFVQLLTYGLVAASTLQGVFA. Ser-196 serves as the catalytic Acyl-ester intermediate. Residues Asn-262, Asn-321, Asn-358, and Asn-416 are each glycosylated (N-linked (GlcNAc...) asparagine).

This sequence belongs to the type-B carboxylesterase/lipase family.

The protein resides in the secreted. The enzyme catalyses a triacylglycerol + H2O = a diacylglycerol + a fatty acid + H(+). This Arthroderma benhamiae (strain ATCC MYA-4681 / CBS 112371) (Trichophyton mentagrophytes) protein is Secreted lipase ARB_01498.